The sequence spans 219 residues: Ras-related protein Rab-3B (219 aa).

N-acetylalanine is present on alanine 2. Residues serine 31, serine 32, valine 33, glycine 34, lysine 35, threonine 36, serine 37, proline 49, and serine 53 each coordinate GTP. Residue serine 32 coordinates GDP. Positions 34, 35, 36, and 37 each coordinate GDP. Position 36 (threonine 36) interacts with Mg(2+). The Switch 1 signature appears at 45-58; the sequence is DTFTPAFVSTVGID. Mg(2+) is bound by residues threonine 54 and aspartate 77. The Switch 2 signature appears at 78–96; that stretch reads TAGQERYRTITTAYYRGAM. Glycine 80 contributes to the GTP binding site. Threonine 86 carries the post-translational modification Phosphothreonine; by LRRK2. Positions 135, 136, and 138 each coordinate GTP. GDP-binding residues include asparagine 135, lysine 136, aspartate 138, methionine 139, alanine 166, and lysine 167. The GTP site is built by alanine 166 and lysine 167. Phosphoserine is present on residues serine 188 and serine 190. S-geranylgeranyl cysteine attachment occurs at residues cysteine 217 and cysteine 219. The residue at position 219 (cysteine 219) is a Cysteine methyl ester.

The protein belongs to the small GTPase superfamily. Rab family. As to quaternary structure, interacts with RIMS1, RIMS2, RPH3A and RPH3AL. The GTP-bound form interacts with GAS8/DRC4 (via coiled-coil domains). The GTP-bound form interacts with REP15. Interacts with GDI2, CHM and CHML; phosphorylation at Thr-86 disrupts these interactions. Interacts with MADD (via uDENN domain); the GTP-bound form is preferred for interaction. Mg(2+) is required as a cofactor. In terms of processing, phosphorylation of Thr-86 in the switch II region by LRRK2 prevents the association of RAB regulatory proteins, including CHM, CHML and RAB GDP dissociation inhibitor GDI2.

It localises to the cell membrane. It is found in the golgi apparatus. It carries out the reaction GTP + H2O = GDP + phosphate + H(+). With respect to regulation, regulated by guanine nucleotide exchange factors (GEFs) which promote the exchange of bound GDP for free GTP. Regulated by GTPase activating proteins (GAPs) which increase the GTP hydrolysis activity. Inhibited by GDP dissociation inhibitors (GDIs) which prevent Rab-GDP dissociation. Functionally, the small GTPases Rab are key regulators of intracellular membrane trafficking, from the formation of transport vesicles to their fusion with membranes. Rabs cycle between an inactive GDP-bound form and an active GTP-bound form that is able to recruit to membranes different sets of downstream effectors directly responsible for vesicle formation, movement, tethering and fusion. The polypeptide is Ras-related protein Rab-3B (Homo sapiens (Human)).